Consider the following 154-residue polypeptide: Endoribonuclease YbeY (154 aa).

Residues histidine 117, histidine 121, and histidine 127 each coordinate Zn(2+).

It belongs to the endoribonuclease YbeY family. It depends on Zn(2+) as a cofactor.

Its subcellular location is the cytoplasm. In terms of biological role, single strand-specific metallo-endoribonuclease involved in late-stage 70S ribosome quality control and in maturation of the 3' terminus of the 16S rRNA. The protein is Endoribonuclease YbeY of Mycoplasma pneumoniae (strain ATCC 29342 / M129 / Subtype 1) (Mycoplasmoides pneumoniae).